The primary structure comprises 227 residues: ATP synthase subunit a (227 aa).

A run of 5 helical transmembrane segments spans residues 16–36, 79–99, 105–125, 176–196, and 202–222; these read AFVY…VAYI, LVAT…IPGF, SLNL…FEGI, LFLL…AFAL, and VLQT…AVAI.

It belongs to the ATPase A chain family. In terms of assembly, F-type ATPases have 2 components, CF(1) - the catalytic core - and CF(0) - the membrane proton channel. CF(1) has five subunits: alpha(3), beta(3), gamma(1), delta(1), epsilon(1). CF(0) has three main subunits: a(1), b(2) and c(9-12). The alpha and beta chains form an alternating ring which encloses part of the gamma chain. CF(1) is attached to CF(0) by a central stalk formed by the gamma and epsilon chains, while a peripheral stalk is formed by the delta and b chains.

The protein resides in the cell inner membrane. Functionally, key component of the proton channel; it plays a direct role in the translocation of protons across the membrane. This is ATP synthase subunit a from Campylobacter concisus (strain 13826).